The sequence spans 230 residues: Demethylmenaquinone methyltransferase (230 aa).

S-adenosyl-L-methionine is bound by residues threonine 57, aspartate 77, 101–102 (DI), and serine 118.

The protein belongs to the class I-like SAM-binding methyltransferase superfamily. MenG/UbiE family.

The enzyme catalyses a 2-demethylmenaquinol + S-adenosyl-L-methionine = a menaquinol + S-adenosyl-L-homocysteine + H(+). It functions in the pathway quinol/quinone metabolism; menaquinone biosynthesis; menaquinol from 1,4-dihydroxy-2-naphthoate: step 2/2. Methyltransferase required for the conversion of demethylmenaquinol (DMKH2) to menaquinol (MKH2). The chain is Demethylmenaquinone methyltransferase from Chlamydia felis (strain Fe/C-56) (Chlamydophila felis).